A 190-amino-acid chain; its full sequence is Histone H5 (190 aa).

The segment at 1–29 (MTESLVLSPAPAKPKRVKASRRSASHPTY) is disordered. Basic residues predominate over residues 13 to 24 (KPKRVKASRRSA). Residues Ser-23, Ser-30, Ser-146, and Ser-167 each carry the phosphoserine modification. Residues 25–98 (SHPTYSEMIA…GASGSFRLAK (74 aa)) form the H15 domain. Residues 87 to 190 (GVGASGSFRL…SGARKSPKKK (104 aa)) are disordered. The segment covering 104 to 190 (RSPGKKKKAV…SGARKSPKKK (87 aa)) has biased composition (basic residues).

This sequence belongs to the histone H1/H5 family. As to expression, erythroid cells.

It is found in the nucleus. The protein resides in the chromosome. In terms of biological role, histone H5 performs the same function as H1, being necessary for the condensation of nucleosome chains into higher order structures, and replaces histone H1 in certain cells. The protein is Histone H5 of Gallus gallus (Chicken).